The primary structure comprises 486 residues: MPQLRDSGTRSLHATEPVPSAEMDGFCRIFGVETEYGVAVTGAERPVDAGQVAMTMFQPIVSRSRSTNTYLTNGSRLYLDVGSHPEYATAEARDPREALAQDLAGEHVMRNLALKAQRKLRESYGAHATIHVFKNNVDSAGHAFGCHENYLVRRFVPLETIEHQLLPFLITRQLYTGAGRMTPDGFQITQRADFLDEAVSSATTRSRPMVNTRDEPHADPDSFRRLHVIIGDSNRSQWSTWMKLAVTHLVLCAIEDAFRHGTPSGFEHCAFADPAAANRTVSRFLDDPHAELTLESGESVSALGLQRRYYAAVKAFIETHVDALASSLPATTIDTIMGEWSRVLDALERGAYDALADRVDWAAKKRLFDALKRRRPDVTFAQMEQLELDYHDIANGRLYGSLVARNQMRELLTGDNVEYAVHNPPTDTRAALRGRFVDAALNVGAQFSADWTHLTLTAPERREAILLDPFEAEPTLGFEQLMEALN.

E33 serves as a coordination point for Mg(2+). Residue R76 participates in ATP binding. Y78 contributes to the Mg(2+) binding site. D80 functions as the Proton acceptor in the catalytic mechanism. A Mg(2+)-binding site is contributed by E86. Residues T89 and W451 each coordinate ATP.

It belongs to the Pup ligase/Pup deamidase family. Pup-conjugating enzyme subfamily.

The catalysed reaction is ATP + [prokaryotic ubiquitin-like protein]-L-glutamate + [protein]-L-lysine = ADP + phosphate + N(6)-([prokaryotic ubiquitin-like protein]-gamma-L-glutamyl)-[protein]-L-lysine.. It functions in the pathway protein degradation; proteasomal Pup-dependent pathway. Its pathway is protein modification; protein pupylation. In terms of biological role, catalyzes the covalent attachment of the prokaryotic ubiquitin-like protein modifier Pup to the proteasomal substrate proteins, thereby targeting them for proteasomal degradation. This tagging system is termed pupylation. The ligation reaction involves the side-chain carboxylate of the C-terminal glutamate of Pup and the side-chain amino group of a substrate lysine. In Bifidobacterium longum (strain DJO10A), this protein is Pup--protein ligase.